The following is a 418-amino-acid chain: Neurotensin receptor type 1 (418 aa).

The Extracellular segment spans residues 1–67 (MRLNSSAPGT…TDIYSKVLVT (67 aa)). Asn-4, Asn-37, and Asn-41 each carry an N-linked (GlcNAc...) asparagine glycan. The chain crosses the membrane as a helical span at residues 68-88 (AVYLALFVVGTVGNTVTAFTL). Residues 89 to 102 (ARKKSLQSLQSTVH) lie on the Cytoplasmic side of the membrane. Residues 103-122 (YHLGSLALSDLLTLLLAMPV) form a helical membrane-spanning segment. Residues 123–142 (ELYNFIWVHHPWAFGDAGCR) lie on the Extracellular side of the membrane. An intrachain disulfide couples Cys-141 to Cys-224. A helical membrane pass occupies residues 143 to 164 (GYYFLRDACTYATALNVASLSV). Residues 165–184 (ERYLAICHPFKAKTLMSRSR) lie on the Cytoplasmic side of the membrane. A helical membrane pass occupies residues 185 to 205 (TKKFISAIWLASALLAVPMLF). Residues 206–234 (TMGEQNRSADGQHAGGLVCTPTIHTATVK) lie on the Extracellular side of the membrane. Residues 235 to 259 (VVIQVNTFMSFIFPMVVISVLNTII) traverse the membrane as a helical segment. Residues 260-303 (ANKLTVMVRQAAEQGQVCTVGGEHSTFSMAIEPGRVQALRHGVR) are Cytoplasmic-facing. The helical transmembrane segment at 304 to 325 (VLRAVVIAFVVCWLPYHVRRLM) threads the bilayer. Residues 321 to 344 (VRRLMFCYISDEQWTPFLYDFYHY) form a neurotensin binding region. Topologically, residues 326–343 (FCYISDEQWTPFLYDFYH) are extracellular. The chain crosses the membrane as a helical span at residues 344–364 (YFYMVTNALFYVSSTINPILY). At 365–418 (NLVSANFRHIFLATLACLCPVWRRRRKRPAFSRKADSVSSNHTLSSNATRETLY) the chain is on the cytoplasmic side. Residues Cys-381 and Cys-383 are each lipidated (S-palmitoyl cysteine).

Belongs to the G-protein coupled receptor 1 family. Neurotensin receptor subfamily. NTSR1 sub-subfamily. Interacts (palmitoylated form) with GNA11. In terms of processing, N-glycosylated. Palmitoylated; this is required for normal localization at membrane rafts and normal GNA11-mediated activation of down-stream signaling cascades. The palmitoylation level increases in response to neurotensin treatment. As to expression, expressed in prostate (at protein level). Detected in colon and peripheral blood mononuclear cells. Detected at very low levels in brain.

It is found in the cell membrane. The protein resides in the membrane raft. In terms of biological role, G-protein coupled receptor for the tridecapeptide neurotensin (NTS). Signaling is effected via G proteins that activate a phosphatidylinositol-calcium second messenger system. Signaling leads to the activation of downstream MAP kinases and protects cells against apoptosis. This Homo sapiens (Human) protein is Neurotensin receptor type 1 (NTSR1).